Reading from the N-terminus, the 419-residue chain is UDP-N-acetylglucosamine 1-carboxyvinyltransferase 2 (419 aa).

24-25 lines the phosphoenolpyruvate pocket; the sequence is KN. Position 94 (Arg94) interacts with UDP-N-acetyl-alpha-D-glucosamine. The Proton donor role is filled by Cys118. Position 118 is a 2-(S-cysteinyl)pyruvic acid O-phosphothioketal (Cys118). UDP-N-acetyl-alpha-D-glucosamine is bound by residues 123–127, Asp307, and Ile329; that span reads RPIDQ.

Belongs to the EPSP synthase family. MurA subfamily.

Its subcellular location is the cytoplasm. It catalyses the reaction phosphoenolpyruvate + UDP-N-acetyl-alpha-D-glucosamine = UDP-N-acetyl-3-O-(1-carboxyvinyl)-alpha-D-glucosamine + phosphate. It participates in cell wall biogenesis; peptidoglycan biosynthesis. In terms of biological role, cell wall formation. Adds enolpyruvyl to UDP-N-acetylglucosamine. The chain is UDP-N-acetylglucosamine 1-carboxyvinyltransferase 2 from Staphylococcus aureus (strain MSSA476).